The following is a 151-amino-acid chain: Ribosome maturation factor RimP (151 aa).

The protein belongs to the RimP family.

The protein localises to the cytoplasm. Required for maturation of 30S ribosomal subunits. The polypeptide is Ribosome maturation factor RimP (Haemophilus influenzae (strain PittGG)).